The primary structure comprises 381 residues: Queuine tRNA-ribosyltransferase (381 aa).

The Proton acceptor role is filled by aspartate 96. Substrate contacts are provided by residues 96-100 (DSGGF), aspartate 150, glutamine 193, and glycine 220. An RNA binding region spans residues 251–257 (GVGSPDA). Aspartate 270 (nucleophile) is an active-site residue. The RNA binding; important for wobble base 34 recognition stretch occupies residues 275–279 (TRIAR). Zn(2+) contacts are provided by cysteine 308, cysteine 310, cysteine 313, and histidine 339.

It belongs to the queuine tRNA-ribosyltransferase family. In terms of assembly, homodimer. Within each dimer, one monomer is responsible for RNA recognition and catalysis, while the other monomer binds to the replacement base PreQ1. Zn(2+) is required as a cofactor.

The catalysed reaction is 7-aminomethyl-7-carbaguanine + guanosine(34) in tRNA = 7-aminomethyl-7-carbaguanosine(34) in tRNA + guanine. The protein operates within tRNA modification; tRNA-queuosine biosynthesis. Catalyzes the base-exchange of a guanine (G) residue with the queuine precursor 7-aminomethyl-7-deazaguanine (PreQ1) at position 34 (anticodon wobble position) in tRNAs with GU(N) anticodons (tRNA-Asp, -Asn, -His and -Tyr). Catalysis occurs through a double-displacement mechanism. The nucleophile active site attacks the C1' of nucleotide 34 to detach the guanine base from the RNA, forming a covalent enzyme-RNA intermediate. The proton acceptor active site deprotonates the incoming PreQ1, allowing a nucleophilic attack on the C1' of the ribose to form the product. After dissociation, two additional enzymatic reactions on the tRNA convert PreQ1 to queuine (Q), resulting in the hypermodified nucleoside queuosine (7-(((4,5-cis-dihydroxy-2-cyclopenten-1-yl)amino)methyl)-7-deazaguanosine). This is Queuine tRNA-ribosyltransferase from Bacillus subtilis (strain 168).